The chain runs to 535 residues: Ribonuclease Y (535 aa).

The chain crosses the membrane as a helical span at residues 4–24; it reads IILLIVSALIGLILGYALISI. Residues 118–141 are disordered; it reads ENLSSKEKVLDSKEQSLTDKSKHI. In terms of domain architecture, KH spans 225 to 285; the sequence is TITSVHLPDD…IRREIARMTL (61 aa). Residues 351–444 enclose the HD domain; the sequence is VLRHSVEVGK…VAAADALSSA (94 aa).

The protein belongs to the RNase Y family.

The protein resides in the cell membrane. Its function is as follows. Endoribonuclease that initiates mRNA decay. In Streptococcus pyogenes serotype M2 (strain MGAS10270), this protein is Ribonuclease Y.